The primary structure comprises 339 residues: Anthranilate phosphoribosyltransferase (339 aa).

5-phospho-alpha-D-ribose 1-diphosphate contacts are provided by residues G81, 84–85 (GD), 91–94 (NIST), 109–117 (KHGNRAASS), and S121. G81 serves as a coordination point for anthranilate. A Mg(2+)-binding site is contributed by S93. An anthranilate-binding site is contributed by N112. R167 lines the anthranilate pocket. D226 and E227 together coordinate Mg(2+).

This sequence belongs to the anthranilate phosphoribosyltransferase family. Homodimer. Mg(2+) is required as a cofactor.

The enzyme catalyses N-(5-phospho-beta-D-ribosyl)anthranilate + diphosphate = 5-phospho-alpha-D-ribose 1-diphosphate + anthranilate. The protein operates within amino-acid biosynthesis; L-tryptophan biosynthesis; L-tryptophan from chorismate: step 2/5. Functionally, catalyzes the transfer of the phosphoribosyl group of 5-phosphorylribose-1-pyrophosphate (PRPP) to anthranilate to yield N-(5'-phosphoribosyl)-anthranilate (PRA). The chain is Anthranilate phosphoribosyltransferase from Maricaulis maris (strain MCS10) (Caulobacter maris).